Here is a 270-residue protein sequence, read N- to C-terminus: Oxidoreductase NAD-binding domain-containing protein 1 (270 aa).

The 104-residue stretch at 20-123 folds into the FAD-binding FR-type domain; that stretch reads MELFSARVCD…VGGNFYFDPQ (104 aa). 137–142 is a binding site for NAD(+); it reads GVGINP.

The chain is Oxidoreductase NAD-binding domain-containing protein 1 (oxnad1) from Danio rerio (Zebrafish).